The following is a 98-amino-acid chain: NADH-ubiquinone oxidoreductase chain 4L (98 aa).

A run of 3 helical transmembrane segments spans residues 1 to 21 (MSMVYANIFLAFIMSLMGLLM), 29 to 49 (SLLCLEGMMLSLFVMMTVTIL), and 61 to 81 (IILLVFAACEAALGLSLLVMV).

This sequence belongs to the complex I subunit 4L family. Core subunit of respiratory chain NADH dehydrogenase (Complex I) which is composed of 45 different subunits.

It localises to the mitochondrion inner membrane. It carries out the reaction a ubiquinone + NADH + 5 H(+)(in) = a ubiquinol + NAD(+) + 4 H(+)(out). Core subunit of the mitochondrial membrane respiratory chain NADH dehydrogenase (Complex I) which catalyzes electron transfer from NADH through the respiratory chain, using ubiquinone as an electron acceptor. Part of the enzyme membrane arm which is embedded in the lipid bilayer and involved in proton translocation. This Phoca fasciata (Ribbon seal) protein is NADH-ubiquinone oxidoreductase chain 4L (MT-ND4L).